An 85-amino-acid polypeptide reads, in one-letter code: Small ribosomal subunit protein uS17 (85 aa).

The protein belongs to the universal ribosomal protein uS17 family. In terms of assembly, part of the 30S ribosomal subunit.

In terms of biological role, one of the primary rRNA binding proteins, it binds specifically to the 5'-end of 16S ribosomal RNA. The sequence is that of Small ribosomal subunit protein uS17 from Mycoplasma pneumoniae (strain ATCC 29342 / M129 / Subtype 1) (Mycoplasmoides pneumoniae).